Reading from the N-terminus, the 490-residue chain is Betaine aldehyde dehydrogenase (490 aa).

Residues Thr26, Ile27, and Asp93 each coordinate K(+). Gly150–Trp152 is a binding site for NAD(+). The active-site Charge relay system is Lys162. Residue Lys176–Glu179 coordinates NAD(+). A K(+)-binding site is contributed by Val180. NAD(+) is bound at residue Gly230–Ser233. Leu246 lines the K(+) pocket. The active-site Proton acceptor is Glu252. Residues Gly254, Cys286, and Glu387 each coordinate NAD(+). The Nucleophile role is filled by Cys286. Cys286 bears the Cysteine sulfenic acid (-SOH) mark. The K(+) site is built by Lys457 and Gly460. The active-site Charge relay system is the Glu464.

It belongs to the aldehyde dehydrogenase family. Dimer of dimers. K(+) is required as a cofactor.

It carries out the reaction betaine aldehyde + NAD(+) + H2O = glycine betaine + NADH + 2 H(+). The protein operates within amine and polyamine biosynthesis; betaine biosynthesis via choline pathway; betaine from betaine aldehyde: step 1/1. Involved in the biosynthesis of the osmoprotectant glycine betaine. Catalyzes the irreversible oxidation of betaine aldehyde to the corresponding acid. The chain is Betaine aldehyde dehydrogenase from Escherichia coli O7:K1 (strain IAI39 / ExPEC).